Reading from the N-terminus, the 148-residue chain is Probable histone H2B.2 (148 aa).

The segment covering 1–32 (MAPKGEKKPAEKKPAEEKKSTVAEKAPAEKKP) has biased composition (basic and acidic residues). The segment at 1–57 (MAPKGEKKPAEKKPAEEKKSTVAEKAPAEKKPKAGKKLPKEGGSAAGEKKKKRSKKS) is disordered. N6-acetyllysine is present on residues K7, K36, and K37. Residue K144 forms a Glycyl lysine isopeptide (Lys-Gly) (interchain with G-Cter in ubiquitin) linkage.

This sequence belongs to the histone H2B family. The nucleosome is a histone octamer containing two molecules each of H2A, H2B, H3 and H4 assembled in one H3-H4 heterotetramer and two H2A-H2B heterodimers. The octamer wraps approximately 147 bp of DNA. Post-translationally, can be acetylated to form H2BK6ac, H2BK33ac and H2BK34ac. In terms of processing, monoubiquitinated to form H2BK143ub1; may give a specific tag for epigenetic transcriptional activation.

Its subcellular location is the nucleus. It is found in the chromosome. In terms of biological role, core component of nucleosome. Nucleosomes wrap and compact DNA into chromatin, limiting DNA accessibility to the cellular machineries which require DNA as a template. Histones thereby play a central role in transcription regulation, DNA repair, DNA replication and chromosomal stability. DNA accessibility is regulated via a complex set of post-translational modifications of histones, also called histone code, and nucleosome remodeling. This Medicago truncatula (Barrel medic) protein is Probable histone H2B.2.